The primary structure comprises 804 residues: Ral guanine nucleotide dissociation stimulator-like 1 (804 aa).

The 131-residue stretch at 101–231 folds into the N-terminal Ras-GEF domain; that stretch reads KIRSIRAGTL…RAQSLLEQLR (131 aa). The Ras-GEF domain maps to 270–539; the sequence is EVDLVAEQLT…YVLSCEVEGL (270 aa). Disordered regions lie at residues 564 to 611 and 640 to 676; these read NDST…TPTH and SASI…GFPP. Composition is skewed to low complexity over residues 581–607 and 640–649; these read PTGS…SDGM and SASISLASPT. Positions 661 to 671 are enriched in polar residues; the sequence is ISLTPLMSPTS. Positions 684-771 constitute a Ras-associating domain; that stretch reads DACIIRVSLE…FDFLLRLRGS (88 aa).

In terms of biological role, probable guanine nucleotide exchange factor. The sequence is that of Ral guanine nucleotide dissociation stimulator-like 1 (rgl1) from Danio rerio (Zebrafish).